We begin with the raw amino-acid sequence, 274 residues long: Elongation factor Ts (274 aa).

Residues 79–82 (TDFV) are involved in Mg(2+) ion dislocation from EF-Tu.

Belongs to the EF-Ts family.

The protein localises to the cytoplasm. Associates with the EF-Tu.GDP complex and induces the exchange of GDP to GTP. It remains bound to the aminoacyl-tRNA.EF-Tu.GTP complex up to the GTP hydrolysis stage on the ribosome. This Azobacteroides pseudotrichonymphae genomovar. CFP2 protein is Elongation factor Ts.